The chain runs to 116 residues: Iron-sulfur cluster insertion protein ErpA (116 aa).

Residues Cys44, Cys108, and Cys110 each coordinate iron-sulfur cluster.

The protein belongs to the HesB/IscA family. In terms of assembly, homodimer. Requires iron-sulfur cluster as cofactor.

In terms of biological role, required for insertion of 4Fe-4S clusters for at least IspG. In Shewanella piezotolerans (strain WP3 / JCM 13877), this protein is Iron-sulfur cluster insertion protein ErpA.